The following is a 174-amino-acid chain: CASP-like protein 1 (174 aa).

The interval 1–25 (MDSKSGRSESAINIPESNSTKHKST) is disordered. Residues 1 to 46 (MDSKSGRSESAINIPESNSTKHKSTAVHTATKVAAVAPRGGGWRRG) are Cytoplasmic-facing. The span at 8 to 18 (SESAINIPESN) shows a compositional bias: polar residues. A helical transmembrane segment spans residues 47 to 67 (VSIFDFILRICALAAALAATA). At 68-96 (TMGTTDQTLPFFTQIIQFQASYDDLPVFT) the chain is on the extracellular side. A helical membrane pass occupies residues 97–117 (FFVVANGIASGYLVLSLPFSI). At 118 to 119 (AT) the chain is on the cytoplasmic side. A helical transmembrane segment spans residues 120 to 139 (IVRPHAAAIKLLLIIFDTQF). At 140–150 (NDFCQRVSGAV) the chain is on the extracellular side. The helical transmembrane segment at 151-171 (VASFVAAVILIFLVVLSAVAI) threads the bilayer. The Cytoplasmic portion of the chain corresponds to 172 to 174 (RKH).

Belongs to the Casparian strip membrane proteins (CASP) family. Homodimer and heterodimers.

It is found in the cell membrane. The chain is CASP-like protein 1 from Triphysaria pusilla (Dwarf owl's-clover).